Reading from the N-terminus, the 45-residue chain is Protamine Z2 (45 aa).

A compositionally biased stretch (basic residues) spans 1 to 23; the sequence is MKCGRKRRRRRRHACKRKKRACK. Residues 1-26 form a disordered region; that stretch reads MKCGRKRRRRRRHACKRKKRACKQRS.

In terms of tissue distribution, testis.

It is found in the nucleus. It localises to the chromosome. In terms of biological role, protamines substitute for histones in the chromatin of sperm during the haploid phase of spermatogenesis. They compact sperm DNA into a highly condensed, stable and inactive complex. In Scyliorhinus canicula (Small-spotted catshark), this protein is Protamine Z2.